We begin with the raw amino-acid sequence, 37 residues long: Large ribosomal subunit protein bL36c (37 aa).

It belongs to the bacterial ribosomal protein bL36 family.

Its subcellular location is the plastid. The protein resides in the chloroplast. The sequence is that of Large ribosomal subunit protein bL36c from Angiopteris evecta (Mule's foot fern).